The chain runs to 480 residues: RNA-binding protein 42 (480 aa).

The disordered stretch occupies residues 1–30 (MAGAGPAPGLPGAGGPVVPGPGAGIPGKSG). A2 carries the N-acetylalanine modification. Over residues 11–27 (PGAGGPVVPGPGAGIPG) the composition is skewed to gly residues. S135 is subject to Phosphoserine. Asymmetric dimethylarginine is present on residues R153, R158, R168, and R181. Residues 236–480 (ELGLGLGLGL…QKEKKKLGLR (245 aa)) are necessary for interaction with HNRNPK. The disordered stretch occupies residues 319–356 (SLRPRPRPPRPEPPPGLMALEVPEPLGEDKKKGKPEKL). Positions 345–356 (GEDKKKGKPEKL) are enriched in basic and acidic residues. One can recognise an RRM domain in the interval 381-459 (FRIFCGDLGN…RPIKLRKSMW (79 aa)).

Belongs to the RRM RBM42 family. Interacts with HNRNPK.

Its subcellular location is the nucleus. The protein resides in the cytoplasm. Functionally, binds (via the RRM domain) to the 3'-untranslated region (UTR) of CDKN1A mRNA. This is RNA-binding protein 42 (RBM42) from Homo sapiens (Human).